Consider the following 150-residue polypeptide: Transthyretin (150 aa).

An N-terminal signal peptide occupies residues 1 to 20 (MAFHSMLLVFLAGLVFLTEA). Cys-33 is subject to Sulfocysteine. Residues Lys-38, Glu-77, and Ser-140 each coordinate L-thyroxine.

It belongs to the transthyretin family. As to quaternary structure, homotetramer. Dimer of dimers. In the homotetramer, subunits assemble around a central channel that can accommodate two ligand molecules. Interacts with RBP4. In terms of processing, sulfonation of the reactive cysteine Cys-33 enhances the stability of the native conformation of TTR, avoiding misassembly of the protein leading to amyloid formation. Strongly expressed in the brain, and to a lesser extent in the eye.

It is found in the secreted. Its function is as follows. Thyroid hormone-binding protein, with a much higher binding affinity for triiodothyronine (T3) than for thyroxine (T4). Probably transports triiodothyronine from the bloodstream to the brain. The chain is Transthyretin (TTR) from Crocodylus porosus (Saltwater crocodile).